The primary structure comprises 240 residues: 2,3,4,5-tetrahydropyridine-2,6-dicarboxylate N-acetyltransferase (240 aa).

This sequence belongs to the transferase hexapeptide repeat family. DapH subfamily.

The enzyme catalyses (S)-2,3,4,5-tetrahydrodipicolinate + acetyl-CoA + H2O = L-2-acetamido-6-oxoheptanedioate + CoA. It functions in the pathway amino-acid biosynthesis; L-lysine biosynthesis via DAP pathway; LL-2,6-diaminopimelate from (S)-tetrahydrodipicolinate (acetylase route): step 1/3. In terms of biological role, catalyzes the transfer of an acetyl group from acetyl-CoA to tetrahydrodipicolinate. This chain is 2,3,4,5-tetrahydropyridine-2,6-dicarboxylate N-acetyltransferase, found in Bacillus anthracis (strain A0248).